The sequence spans 98 residues: ESAT-6-like protein EsxJ (98 aa).

This sequence belongs to the WXG100 family. CFP-10 subfamily.

The protein resides in the secreted. The sequence is that of ESAT-6-like protein EsxJ from Mycobacterium bovis (strain ATCC BAA-935 / AF2122/97).